A 374-amino-acid chain; its full sequence is tRNA-specific 2-thiouridylase MnmA (374 aa).

ATP-binding positions include 12–19 and methionine 38; that span reads GMSGGVDS. Residues 98–100 are interaction with target base in tRNA; it reads NPD. Cysteine 103 acts as the Nucleophile in catalysis. Cysteine 103 and cysteine 200 form a disulfide bridge. Glycine 127 is a binding site for ATP. The tract at residues 150–152 is interaction with tRNA; sequence KDQ. Cysteine 200 (cysteine persulfide intermediate) is an active-site residue. Residues 311-312 form an interaction with tRNA region; it reads RY.

This sequence belongs to the MnmA/TRMU family.

The protein resides in the cytoplasm. It carries out the reaction S-sulfanyl-L-cysteinyl-[protein] + uridine(34) in tRNA + AH2 + ATP = 2-thiouridine(34) in tRNA + L-cysteinyl-[protein] + A + AMP + diphosphate + H(+). Functionally, catalyzes the 2-thiolation of uridine at the wobble position (U34) of tRNA, leading to the formation of s(2)U34. The protein is tRNA-specific 2-thiouridylase MnmA of Enterococcus faecalis (strain ATCC 700802 / V583).